The sequence spans 116 residues: Protein TRACHEARY ELEMENT DIFFERENTIATION-RELATED 6 (116 aa).

Residues 1–24 (MASTDSVYRPTPTPDHDTTVVVVV) lie on the Extracellular side of the membrane. The chain crosses the membrane as a helical span at residues 25–45 (FVSLGCVMFLAFLAFVIWFLI). At 46–116 (KKRSRKHRER…GVGSSVVSRS (71 aa)) the chain is on the cytoplasmic side.

As to quaternary structure, interacts with CESA7/IRX3, a subunit of the secondary cell wall (SCW)-related cellulose synthase complex. Expressed preferentially in differentiating vessel elements in seedlings.

The protein resides in the cell membrane. Its subcellular location is the secreted. It is found in the cell wall. Involved in the secondary cell wall (SCW) formation of vessel elements (e.g. protoxylem and metaxylem), thus promoting tracheary element (TE) differentiation. The sequence is that of Protein TRACHEARY ELEMENT DIFFERENTIATION-RELATED 6 from Arabidopsis thaliana (Mouse-ear cress).